The sequence spans 203 residues: Superoxide dismutase [Mn] (203 aa).

Mn(2+)-binding residues include His27, His81, Asp164, and His168.

Belongs to the iron/manganese superoxide dismutase family. In terms of assembly, homodimer. Mn(2+) is required as a cofactor.

It carries out the reaction 2 superoxide + 2 H(+) = H2O2 + O2. In terms of biological role, destroys superoxide anion radicals which are normally produced within the cells and which are toxic to biological systems. The polypeptide is Superoxide dismutase [Mn] (sodA) (Pseudomonas putida (Arthrobacter siderocapsulatus)).